We begin with the raw amino-acid sequence, 503 residues long: Maturase K (503 aa).

This sequence belongs to the intron maturase 2 family. MatK subfamily.

The protein localises to the plastid. It localises to the chloroplast. Usually encoded in the trnK tRNA gene intron. Probably assists in splicing its own and other chloroplast group II introns. The protein is Maturase K of Vicia villosa (Hairy vetch).